Here is a 191-residue protein sequence, read N- to C-terminus: Recombination protein RecR (191 aa).

The C4-type zinc finger occupies C56 to C71. Residues K78–P170 form the Toprim domain.

It belongs to the RecR family.

Functionally, may play a role in DNA repair. It seems to be involved in an RecBC-independent recombinational process of DNA repair. It may act with RecF and RecO. In Mycoplasmopsis pulmonis (strain UAB CTIP) (Mycoplasma pulmonis), this protein is Recombination protein RecR.